Consider the following 475-residue polypeptide: MPKLTQLSLVTLALTAGSTLVSQTASAHGYVVSPESRSYACKTGSNVNCGAVQWEPQSVEGASGFPESGPADGKIASAANGAFSPLDEQSPSRWSKRDIKSGWNDFSWQFTANHVTRNWRYYLTRQGWDQNQPLSRASFDLAPFCVIDGGMVQPPKLVTHNCYVPEDRSGYQVILAVWEVGDTTNSFYNAIDVNFSSGAVVPGEWTDIGDINPSLDLKAGDKVMTRVFDANGEQSAKQTQITIADATQGAKQNWPFLLASAINAQQPQLKAGQKNAAGVISPVYGKNEIFAAPKSGLERVEVSFDIAPAPGNQLNVTSLADDYTIVDGAAQVSFDVSTNADMQVSAYLFSHDGTAAGYVTQAVNNTSASLVLDVVAPKAGHYHLQVKAEPKQGEVIQQNFDLFLKDQATAPDADFIFPEGIKSYVAGTKVLQPKTGKVYQCKPWPYNGYCVQWSPTATGFEPGIGNSWTMAWTEL.

Positions 1 to 27 (MPKLTQLSLVTLALTAGSTLVSQTASA) are cleaved as a signal peptide. The 168-residue stretch at 28–195 (HGYVVSPESR…SFYNAIDVNF (168 aa)) folds into the Chitin-binding type-4 domain. The 43-residue stretch at 426–468 (AGTKVLQPKTGKVYQCKPWPYNGYCVQWSPTATGFEPGIGNSW) folds into the Chitin-binding type-3 domain.

It belongs to the GbpA family.

Its subcellular location is the secreted. In terms of biological role, probably interacts with GlcNAc residues. May promote attachment to both epithelial cell surfaces and chitin. The polypeptide is GlcNAc-binding protein A (Shewanella oneidensis (strain ATCC 700550 / JCM 31522 / CIP 106686 / LMG 19005 / NCIMB 14063 / MR-1)).